Consider the following 513-residue polypeptide: Activin receptor type-2A (513 aa).

An N-terminal signal peptide occupies residues 1–19 (MGAAAKLAFAVFLISCSSG). At 20–135 (AILGRSETQE…TSNPVTPKPP (116 aa)) the chain is on the extracellular side. Intrachain disulfides connect Cys-30–Cys-60, Cys-50–Cys-78, Cys-85–Cys-104, Cys-91–Cys-103, and Cys-105–Cys-110. Residues Asn-43 and Asn-66 are each glycosylated (N-linked (GlcNAc...) asparagine). The helical transmembrane segment at 136-161 (YYNILLYSLVPLMLIAGIVICAFWVY) threads the bilayer. Topologically, residues 162–513 (RHHMMAYPPV…VDFPPKESSL (352 aa)) are cytoplasmic. One can recognise a Protein kinase domain in the interval 192-485 (LQLLEVKARG…GERITQMQRL (294 aa)). ATP-binding positions include 198-206 (KARGRFGCV) and Lys-219. Residue Asp-322 is the Proton acceptor of the active site.

The protein belongs to the protein kinase superfamily. TKL Ser/Thr protein kinase family. TGFB receptor subfamily. Part of a complex consisting of MAGI2/ARIP1, ACVR2A, ACVR1B and SMAD3. Interacts with MAGI2/ARIP1. Interacts with type I receptor ACVR1. Interacts with BMP7. Interacts with TSC22D1/TSC-22. Interacts with activin A/INHBA. The cofactor is Mg(2+). Requires Mn(2+) as cofactor.

It localises to the cell membrane. The enzyme catalyses L-threonyl-[receptor-protein] + ATP = O-phospho-L-threonyl-[receptor-protein] + ADP + H(+). It carries out the reaction L-seryl-[receptor-protein] + ATP = O-phospho-L-seryl-[receptor-protein] + ADP + H(+). Its function is as follows. On ligand binding, forms a receptor complex consisting of two type II and two type I transmembrane serine/threonine kinases. Type II receptors phosphorylate and activate type I receptors which autophosphorylate, then bind and activate SMAD transcriptional regulators. Receptor for activin A, activin B and inhibin A. Mediates induction of adipogenesis by GDF6. This is Activin receptor type-2A from Rattus norvegicus (Rat).